Here is a 411-residue protein sequence, read N- to C-terminus: Argininosuccinate lyase (411 aa).

This sequence belongs to the lyase 1 family. Argininosuccinate lyase subfamily.

It localises to the cytoplasm. It catalyses the reaction 2-(N(omega)-L-arginino)succinate = fumarate + L-arginine. Its pathway is amino-acid biosynthesis; L-arginine biosynthesis; L-arginine from L-ornithine and carbamoyl phosphate: step 3/3. The polypeptide is Argininosuccinate lyase (Legionella pneumophila (strain Paris)).